A 207-amino-acid polypeptide reads, in one-letter code: MNQTTIIGIAGGSGSGKTTVTNAIMKNLEGHSVALLAQDYYYKDQSHLTFEERLETNYDHPFAFDNDLLIHNLKDLRNGKPVEVPTYDYSQHTRSKETIAFDPKDVIIVEGIFALENNTLRDMMDVKIYVDTDADLRILRRLTRDTKERGRTMESVINQYLNVVRPMHEQFIEPTKKHADIIIPEGGSNKVAIDIMTTKIQSLVSKK.

11–18 lines the ATP pocket; it reads GGSGSGKT.

The protein belongs to the uridine kinase family.

The protein localises to the cytoplasm. The enzyme catalyses uridine + ATP = UMP + ADP + H(+). It catalyses the reaction cytidine + ATP = CMP + ADP + H(+). The protein operates within pyrimidine metabolism; CTP biosynthesis via salvage pathway; CTP from cytidine: step 1/3. Its pathway is pyrimidine metabolism; UMP biosynthesis via salvage pathway; UMP from uridine: step 1/1. In Staphylococcus epidermidis (strain ATCC 35984 / DSM 28319 / BCRC 17069 / CCUG 31568 / BM 3577 / RP62A), this protein is Uridine kinase.